A 278-amino-acid polypeptide reads, in one-letter code: Acyl-[acyl-carrier-protein]--UDP-N-acetylglucosamine O-acyltransferase (278 aa).

This sequence belongs to the transferase hexapeptide repeat family. LpxA subfamily. In terms of assembly, homotrimer.

The protein localises to the cytoplasm. The enzyme catalyses a (3R)-hydroxyacyl-[ACP] + UDP-N-acetyl-alpha-D-glucosamine = a UDP-3-O-[(3R)-3-hydroxyacyl]-N-acetyl-alpha-D-glucosamine + holo-[ACP]. It functions in the pathway glycolipid biosynthesis; lipid IV(A) biosynthesis; lipid IV(A) from (3R)-3-hydroxytetradecanoyl-[acyl-carrier-protein] and UDP-N-acetyl-alpha-D-glucosamine: step 1/6. Functionally, involved in the biosynthesis of lipid A, a phosphorylated glycolipid that anchors the lipopolysaccharide to the outer membrane of the cell. This Brucella abortus (strain S19) protein is Acyl-[acyl-carrier-protein]--UDP-N-acetylglucosamine O-acyltransferase.